We begin with the raw amino-acid sequence, 144 residues long: Small ribosomal subunit protein eS19A (144 aa).

Residues 83–102 (VNRGMRPSHHRDGSGSVQRK) are disordered.

The protein belongs to the eukaryotic ribosomal protein eS19 family. In terms of assembly, component of the small ribosomal subunit (SSU). Mature yeast ribosomes consist of a small (40S) and a large (60S) subunit. The 40S small subunit contains 1 molecule of ribosomal RNA (18S rRNA) and at least 33 different proteins. The large 60S subunit contains 3 rRNA molecules (25S, 5.8S and 5S rRNA) and at least 46 different proteins.

The protein localises to the cytoplasm. The protein resides in the nucleus. It localises to the nucleolus. Component of the ribosome, a large ribonucleoprotein complex responsible for the synthesis of proteins in the cell. The small ribosomal subunit (SSU) binds messenger RNAs (mRNAs) and translates the encoded message by selecting cognate aminoacyl-transfer RNA (tRNA) molecules. The large subunit (LSU) contains the ribosomal catalytic site termed the peptidyl transferase center (PTC), which catalyzes the formation of peptide bonds, thereby polymerizing the amino acids delivered by tRNAs into a polypeptide chain. The nascent polypeptides leave the ribosome through a tunnel in the LSU and interact with protein factors that function in enzymatic processing, targeting, and the membrane insertion of nascent chains at the exit of the ribosomal tunnel. eS19 is required for proper maturation of the small (40S) ribosomal subunit. Binds to 40S pre-ribosomal particles, probably required after association of NOC4 but before association of ENP1, TSR1 and RIO2 with 20/21S pre-rRNA. This is Small ribosomal subunit protein eS19A (rps1901) from Schizosaccharomyces pombe (strain 972 / ATCC 24843) (Fission yeast).